The sequence spans 204 residues: Cold and drought-regulated protein CORA (204 aa).

18 tandem repeats follow at residues 54–59 (YNHGGG), 65–70 (YNHGGG), 71–76 (YNHGGG), 78–83 (YHNGGG), 85–90 (YNHGGG), 98–100 (HGG), 101–103 (HGG), 112–114 (HGG), 115–117 (HGG), 126–128 (HGG), 129–131 (HGG), 164–169 (YNHGGG), 171–176 (YNHGGG), 178–180 (HGG), 181–183 (HGG), 184–186 (HGG), 187–189 (HGG), and 190–192 (HGG). The segment at 54 to 176 (YNHGGGYNGG…GGGGYNHGGG (123 aa)) is 7 X 6 AA repeats of Y-N-H-G-G-G. Residues 98-192 (HGGHGGGGYN…GHGGHGGHGG (95 aa)) form an 11 X 3 AA repeats of H-G-G region. The segment covering 169 to 194 (GGYNHGGGGHGGHGGHGGHGGHGGHG) has biased composition (gly residues). The segment at 169–204 (GGYNHGGGGHGGHGGHGGHGGHGGHGAVQTEDNTQN) is disordered.

Belongs to the GRP family.

Its function is as follows. May be involved in resistance of the plant to environmental stress. The polypeptide is Cold and drought-regulated protein CORA (CORA) (Medicago sativa (Alfalfa)).